Consider the following 362-residue polypeptide: Phospho-N-acetylmuramoyl-pentapeptide-transferase (362 aa).

10 consecutive transmembrane segments (helical) span residues 28-48 (IISFLSALFISLGIGHCVITW), 72-92 (TPTMGGIVLILSIVISVMVCA), 94-114 (LSNIYVWYVFFILITYGILGL), 131-151 (VLHKYFWQSLIALTLVIIIFM), 169-189 (FMPQLGIWYIFLAYFVVVGTS), 200-220 (GLAIMPIMFVAAGLAVVAWIS), 236-256 (FSGELIIICSAIIGAGLGFLW), 264-284 (IFMGDVGSLSLGGTLGIIAVL), 290-310 (LLLIMGGMFVIETLSVILQVI), and 339-359 (IIVRFWIISLMLVFVGLITLK).

Belongs to the glycosyltransferase 4 family. MraY subfamily. It depends on Mg(2+) as a cofactor.

The protein resides in the cell inner membrane. The catalysed reaction is UDP-N-acetyl-alpha-D-muramoyl-L-alanyl-gamma-D-glutamyl-meso-2,6-diaminopimeloyl-D-alanyl-D-alanine + di-trans,octa-cis-undecaprenyl phosphate = di-trans,octa-cis-undecaprenyl diphospho-N-acetyl-alpha-D-muramoyl-L-alanyl-D-glutamyl-meso-2,6-diaminopimeloyl-D-alanyl-D-alanine + UMP. The protein operates within cell wall biogenesis; peptidoglycan biosynthesis. Its function is as follows. Catalyzes the initial step of the lipid cycle reactions in the biosynthesis of the cell wall peptidoglycan: transfers peptidoglycan precursor phospho-MurNAc-pentapeptide from UDP-MurNAc-pentapeptide onto the lipid carrier undecaprenyl phosphate, yielding undecaprenyl-pyrophosphoryl-MurNAc-pentapeptide, known as lipid I. The polypeptide is Phospho-N-acetylmuramoyl-pentapeptide-transferase (Blochmanniella pennsylvanica (strain BPEN)).